Here is a 98-residue protein sequence, read N- to C-terminus: Large ribosomal subunit protein uL23 (98 aa).

The protein belongs to the universal ribosomal protein uL23 family. In terms of assembly, part of the 50S ribosomal subunit. Contacts protein L29, and trigger factor when it is bound to the ribosome.

In terms of biological role, one of the early assembly proteins it binds 23S rRNA. One of the proteins that surrounds the polypeptide exit tunnel on the outside of the ribosome. Forms the main docking site for trigger factor binding to the ribosome. The sequence is that of Large ribosomal subunit protein uL23 from Rickettsia felis (strain ATCC VR-1525 / URRWXCal2) (Rickettsia azadi).